We begin with the raw amino-acid sequence, 162 residues long: MANPEFYGLSTTTLSGQPFPFKDLEGKAVLIVNVASKCGFTPQYKGLEELYQQYKDRGLVILGFPCNQFGGQEPGDASAIGEFCQRNFGVTFPIMEKSDVNGNDANPVFKYLKSQKKQFMMEMIKWNFEKFLVDKSGQVVARFSSMATPASLAPEIEKVLNA.

Residue C38 is modified to S-selanylcysteine. The active site involves N87.

Belongs to the glutathione peroxidase family. Cys-87 is S-selanylated when selenium levels are high. S-selanylation may increase or be important for glutathione peroxidase activity.

It is found in the cytoplasm. The catalysed reaction is 2 glutathione + H2O2 = glutathione disulfide + 2 H2O. It carries out the reaction a hydroperoxide + [thioredoxin]-dithiol = an alcohol + [thioredoxin]-disulfide + H2O. Its function is as follows. Has thioredoxin peroxidase activity. May also have glutathione peroxidase activity, although this activity is controversial. Protects cells against reactive oxygen species, which may include photooxidative stress, hydrogen peroxide and organic hydroperoxides. This Chlamydomonas reinhardtii (Chlamydomonas smithii) protein is Glutathione peroxidase-like peroxiredoxin GPX5.